Here is a 731-residue protein sequence, read N- to C-terminus: E3 ubiquitin-protein ligase COP1 (731 aa).

The segment at 1-40 (MSGSRQAGSGSAGTSPGSSAASSVTSASSSLSSSPSPPSV) is disordered. Positions 109–113 (GSRKR) match the Nuclear localization signal 1 motif. The segment at 136 to 174 (CPICFDMIEEAYMTKCGHSFCYKCIHQSLEDNNRCPKCN) adopts an RING-type zinc-finger fold. The Nuclear localization signal 2 motif lies at 195-206 (KQKQRFEEKRFK). The stretch at 233-301 (LDLANVNLML…DIKRVEEMSG (69 aa)) forms a coiled coil. Residues 235-245 (LANVNLMLELL) carry the Nuclear export signal motif. Positions 305–325 (PVSEDSTVPQFEAPSPSHSSI) are disordered. WD repeat units lie at residues 419-458 (NGSS…QDAV), 468-508 (TCNS…RSKV), 511-551 (EHEK…SVAS), 553-593 (EAKA…QPIM), 597-635 (GHRK…CLRS), 638-677 (GHIN…TLLT), and 691-729 (RKED…KVLE). Positions 643–645 (KNF) are interaction with TRIB1.

It belongs to the COP1 family. In terms of assembly, homodimer. Homodimerization is mediated by the coiled coil domain. Component of the DCX DET1-COP1 ubiquitin ligase complex at least composed of RBX1, DET1, DDB1, CUL4A and COP1. Isoform 2 does not interact with CUL4A but still binds to RBX1, suggesting that the interaction may be mediated by another cullin protein. Isoform 1 and isoform 2 interact with CUL5 but not with CUL1, CUL2 not CUL3. Interacts with bZIP transcription factors JUN, JUNB and JUND but not with FOS, ATF2 nor XBP1. Interacts with p53 (TP53). Interacts with COPS6; this interaction stabilizes RFWD2 through reducing its auto-ubiquitination and decelerating its turnover rate. Interacts with SFN; this interaction leads to SFN degradation. Isoform 4 forms heterodimers with isoform 1, preventing its association with DET1. Interacts with p53/TP53 and MTA1. Interacts with TRIB1 (via C-terminus) and TRIB2. In terms of processing, autoubiquitinated. MTA1 destabilizes it by promoting its autoubiquitination. In terms of tissue distribution, ubiquitously expressed at low level. Expressed at higher level in testis, placenta, skeletal muscle and heart.

The protein resides in the nucleus speckle. It localises to the cytoplasm. It catalyses the reaction S-ubiquitinyl-[E2 ubiquitin-conjugating enzyme]-L-cysteine + [acceptor protein]-L-lysine = [E2 ubiquitin-conjugating enzyme]-L-cysteine + N(6)-ubiquitinyl-[acceptor protein]-L-lysine.. The protein operates within protein modification; protein ubiquitination. TRIB1 competes with substrates for RFWD2 binding. E3 ubiquitin-protein ligase that mediates ubiquitination and subsequent proteasomal degradation of target proteins. E3 ubiquitin ligases accept ubiquitin from an E2 ubiquitin-conjugating enzyme in the form of a thioester and then directly transfers the ubiquitin to targeted substrates. Involved in JUN ubiquitination and degradation. Directly involved in p53 (TP53) ubiquitination and degradation, thereby abolishing p53-dependent transcription and apoptosis. Ubiquitinates p53 independently of MDM2 or RCHY1. Probably mediates E3 ubiquitin ligase activity by functioning as the essential RING domain subunit of larger E3 complexes. In contrast, it does not constitute the catalytic RING subunit in the DCX DET1-COP1 complex that negatively regulates JUN, the ubiquitin ligase activity being mediated by RBX1. Involved in 14-3-3 protein sigma/SFN ubiquitination and proteasomal degradation, leading to AKT activation and promotion of cell survival. Ubiquitinates MTA1 leading to its proteasomal degradation. Upon binding to TRIB1, ubiquitinates CEBPA, which lacks a canonical COP1-binding motif. The protein is E3 ubiquitin-protein ligase COP1 of Homo sapiens (Human).